We begin with the raw amino-acid sequence, 154 residues long: Superoxide dismutase [Cu-Zn] (154 aa).

Residues H47, H49, and H64 each contribute to the Cu cation site. Cysteines 58 and 147 form a disulfide. H64, H72, H81, and D84 together coordinate Zn(2+). Position 121 (H121) interacts with Cu cation. Basic and acidic residues predominate over residues 125–137; that stretch reads DDLGRGGNEESKK. Residues 125 to 147 are disordered; sequence DDLGRGGNEESKKTGNAGPRPAC. Residue R144 coordinates substrate.

As to quaternary structure, homodimer. It depends on Cu cation as a cofactor. Requires Zn(2+) as cofactor.

The protein localises to the cytoplasm. It carries out the reaction 2 superoxide + 2 H(+) = H2O2 + O2. Its function is as follows. Destroys radicals which are normally produced within the cells and which are toxic to biological systems. The polypeptide is Superoxide dismutase [Cu-Zn] (Aspergillus niger).